Reading from the N-terminus, the 424-residue chain is Serine--tRNA ligase (424 aa).

Thr-233–Glu-235 contributes to the L-serine binding site. Arg-264–Glu-266 is an ATP binding site. Residue Glu-287 coordinates L-serine. ATP is bound at residue Glu-351–Ser-354. Residue Ser-386 coordinates L-serine.

This sequence belongs to the class-II aminoacyl-tRNA synthetase family. Type-1 seryl-tRNA synthetase subfamily. In terms of assembly, homodimer. The tRNA molecule binds across the dimer.

The protein localises to the cytoplasm. The catalysed reaction is tRNA(Ser) + L-serine + ATP = L-seryl-tRNA(Ser) + AMP + diphosphate + H(+). It carries out the reaction tRNA(Sec) + L-serine + ATP = L-seryl-tRNA(Sec) + AMP + diphosphate + H(+). The protein operates within aminoacyl-tRNA biosynthesis; selenocysteinyl-tRNA(Sec) biosynthesis; L-seryl-tRNA(Sec) from L-serine and tRNA(Sec): step 1/1. Its function is as follows. Catalyzes the attachment of serine to tRNA(Ser). Is also able to aminoacylate tRNA(Sec) with serine, to form the misacylated tRNA L-seryl-tRNA(Sec), which will be further converted into selenocysteinyl-tRNA(Sec). The sequence is that of Serine--tRNA ligase from Pseudothermotoga lettingae (strain ATCC BAA-301 / DSM 14385 / NBRC 107922 / TMO) (Thermotoga lettingae).